Consider the following 1134-residue polypeptide: DNA damage-binding protein 1 (1134 aa).

It belongs to the DDB1 family. Interacts with cdt-1 and cul-4. Expressed at high levels in the spermatheca of adult hermaphrodites.

The protein resides in the cytoplasm. It is found in the nucleus. The protein operates within protein modification; protein ubiquitination. Plays a role in DNA repair. May be a component of an E3 ubiquitin-protein ligase which promotes histone ubiquitination in response to UV irradiation. Histone ubiquitination may be important for subsequent DNA repair. Promotes the degradation of the replication licensing factor cdt-1 during S-phase, thereby preventing rereplication of DNA during a single round of cell division. This is DNA damage-binding protein 1 (ddb-1) from Caenorhabditis elegans.